The sequence spans 75 residues: Small ribosomal subunit protein eS31 (75 aa).

4 residues coordinate Zn(2+): cysteine 41, cysteine 44, cysteine 60, and cysteine 63. The C4-type zinc finger occupies 41 to 63; that stretch reads CPRCGSIMAHHLKPNERWSCGKC.

Belongs to the eukaryotic ribosomal protein eS31 family. As to quaternary structure, part of the 30S ribosomal subunit. Zn(2+) serves as cofactor.

This chain is Small ribosomal subunit protein eS31, found in Saccharolobus solfataricus (strain ATCC 35092 / DSM 1617 / JCM 11322 / P2) (Sulfolobus solfataricus).